Consider the following 485-residue polypeptide: D-alanine--D-alanyl carrier protein ligase (485 aa).

Position 144 to 145 (144 to 145 (TS)) interacts with ATP. Residue Asp189 coordinates D-alanine. 284–289 (NTYGPT) lines the ATP pocket. D-alanine is bound at residue Val293. Asp365 and Lys473 together coordinate ATP. Lys473 is a binding site for D-alanine.

It belongs to the ATP-dependent AMP-binding enzyme family. DltA subfamily.

Its subcellular location is the cytoplasm. It carries out the reaction holo-[D-alanyl-carrier protein] + D-alanine + ATP = D-alanyl-[D-alanyl-carrier protein] + AMP + diphosphate. Its pathway is cell wall biogenesis; lipoteichoic acid biosynthesis. Functionally, catalyzes the first step in the D-alanylation of lipoteichoic acid (LTA), the activation of D-alanine and its transfer onto the D-alanyl carrier protein (Dcp) DltC. In an ATP-dependent two-step reaction, forms a high energy D-alanyl-AMP intermediate, followed by transfer of the D-alanyl residue as a thiol ester to the phosphopantheinyl prosthetic group of the Dcp. D-alanylation of LTA plays an important role in modulating the properties of the cell wall in Gram-positive bacteria, influencing the net charge of the cell wall. This Staphylococcus aureus (strain USA300) protein is D-alanine--D-alanyl carrier protein ligase.